Reading from the N-terminus, the 430-residue chain is Enolase (430 aa).

Gln167 contacts (2R)-2-phosphoglycerate. Residue Glu209 is the Proton donor of the active site. Residues Asp246, Glu289, and Asp316 each contribute to the Mg(2+) site. (2R)-2-phosphoglycerate is bound by residues Lys341, Arg370, Ser371, and Lys392. The Proton acceptor role is filled by Lys341.

The protein belongs to the enolase family. Component of the RNA degradosome, a multiprotein complex involved in RNA processing and mRNA degradation. It depends on Mg(2+) as a cofactor.

It localises to the cytoplasm. Its subcellular location is the secreted. The protein resides in the cell surface. The catalysed reaction is (2R)-2-phosphoglycerate = phosphoenolpyruvate + H2O. Its pathway is carbohydrate degradation; glycolysis; pyruvate from D-glyceraldehyde 3-phosphate: step 4/5. Its function is as follows. Catalyzes the reversible conversion of 2-phosphoglycerate (2-PG) into phosphoenolpyruvate (PEP). It is essential for the degradation of carbohydrates via glycolysis. The polypeptide is Enolase (Alcanivorax borkumensis (strain ATCC 700651 / DSM 11573 / NCIMB 13689 / SK2)).